The following is a 387-amino-acid chain: Methionine aminopeptidase 1 (387 aa).

At serine 2 the chain carries N-acetylserine. Residues 2–10 (STATTTVTT) constitute a propeptide that is removed on maturation. The segment at 19 to 73 (KIYCSGLQCGRETSSQMKCPVCLKQGIVSIFCDTSCYENNYKAHKALHNAKDGLE) adopts a C6H2-type zinc-finger fold. Residues cysteine 22, cysteine 27, cysteine 37, cysteine 40, cysteine 50, cysteine 54, histidine 62, and histidine 66 each coordinate Zn(2+). Histidine 202 contributes to the a protein binding site. Zn(2+) contacts are provided by aspartate 219, aspartate 230, and histidine 294. Histidine 301 contributes to the a protein binding site. Residues glutamate 327 and glutamate 358 each contribute to the Zn(2+) site.

The protein belongs to the peptidase M24A family. Methionine aminopeptidase type 1 subfamily. Associates with the 60S ribosomal subunit of the 80S translational complex. Requires Zn(2+) as cofactor. Co(2+) is required as a cofactor. It depends on Mn(2+) as a cofactor. Fe(2+) serves as cofactor.

The protein resides in the cytoplasm. It carries out the reaction Release of N-terminal amino acids, preferentially methionine, from peptides and arylamides.. With respect to regulation, in contract to the MetAP 2 isoform, is not inhibited by the fungal metabolite fumagillin, an antiangiogenic drug. Its function is as follows. Cotranslationally removes the N-terminal methionine from nascent proteins. The N-terminal methionine is often cleaved when the second residue in the primary sequence is small and uncharged (Met-Ala-, Cys, Gly, Pro, Ser, Thr, or Val). Plays the major role in N-terminal methionine removal. Less efficient when the second residue is Val. The protein is Methionine aminopeptidase 1 (MAP1) of Saccharomyces cerevisiae (strain ATCC 204508 / S288c) (Baker's yeast).